The chain runs to 329 residues: Epoxide hydrolase (329 aa).

Residues 35 to 308 enclose the AB hydrolase-1 domain; that stretch reads PAVLFCHGFP…DNVGHWVQHE (274 aa). Asp111 acts as the Nucleophile in catalysis. Tyr242 (proton donor) is an active-site residue. His303 serves as the catalytic Proton acceptor.

The protein belongs to the AB hydrolase superfamily. Epoxide hydrolase family. As to quaternary structure, homodimer.

It carries out the reaction an epoxide + H2O = an ethanediol. The catalysed reaction is (R)-styrene oxide + H2O = (R)-styrene glycol. It catalyses the reaction (S)-styrene oxide + H2O = (S)-styrene glycol. The enzyme catalyses 3,4-epoxy-1-cyclohexene + H2O = cyclohex-3-ene-1,2-diol. Catalyzes the hydrolysis of various epoxides into diols. In vitro, shows the strongest activity toward aromatic and cyclic aliphatic epoxide compounds, since it shows strong activity toward (R)-styrene oxide, (S)-styrene oxide, and 3,4-epoxy-1-cyclohexene, but very weak activity toward (R)-epichlorohydrin, (S)-epichlorohydrin, and 1,2-epoxy-9-decene. This chain is Epoxide hydrolase, found in Caballeronia sordidicola (Burkholderia sordidicola).